Here is a 175-residue protein sequence, read N- to C-terminus: Probable DNA-directed RNA polymerase subunit delta (175 aa).

Positions 14–81 constitute an HTH HARE-type domain; that stretch reads CSMIEVVHSV…GENRWGLRSW (68 aa). The interval 91 to 175 is disordered; that stretch reads ILPQPKPKKK…DETEEEEEEL (85 aa). Positions 106 to 175 are enriched in acidic residues; that stretch reads DGFDDYIEED…DETEEEEEEL (70 aa).

This sequence belongs to the RpoE family. As to quaternary structure, RNAP is composed of a core of 2 alpha, a beta and a beta' subunits. The core is associated with a delta subunit and one of several sigma factors.

Its function is as follows. Participates in both the initiation and recycling phases of transcription. In the presence of the delta subunit, RNAP displays an increased specificity of transcription, a decreased affinity for nucleic acids, and an increased efficiency of RNA synthesis because of enhanced recycling. This Bacillus anthracis protein is Probable DNA-directed RNA polymerase subunit delta.